The chain runs to 773 residues: ATP-dependent zinc metalloprotease YME1L1 (773 aa).

Topologically, residues 1–295 (MFSLSSTVQP…TNDSLRRTRL (295 aa)) are mitochondrial matrix. The chain crosses the membrane as a helical span at residues 296 to 316 (ILFVLLLFGIYGLLKNPFLSV). Residues 317-773 (RFRTTTGLDS…VLEGKKLEVR (457 aa)) lie on the Mitochondrial intermembrane side of the membrane. ATP-binding residues include Val-341, Thr-383, Gly-384, Lys-385, Thr-386, and Leu-387. His-599 provides a ligand contact to Zn(2+). The active site involves Glu-600. The Zn(2+) site is built by His-603 and Asp-677.

In the N-terminal section; belongs to the AAA ATPase family. This sequence in the C-terminal section; belongs to the peptidase M41 family. As to quaternary structure, homohexamer; may also form heterohexamers. Exists in several complexes of 600-1100 kDa. Interacts with AFG1L. The cofactor is Zn(2+). Post-translationally, proteolytically processed by mitochondrial processing peptidase (MPP) to generate the mature form. Degraded in an OMA1-dependent manner in response to oxidative stress. As to expression, high expression in cardiac and skeletal muscle mitochondria.

It localises to the mitochondrion inner membrane. It is found in the mitochondrion. The enzyme catalyses ATP + H2O = ADP + phosphate + H(+). ATP-dependent metalloprotease that catalyzes the degradation of folded and unfolded proteins with a suitable degron sequence in the mitochondrial intermembrane region. Plays an important role in regulating mitochondrial morphology and function by cleaving OPA1 at position S2, giving rise to a form of OPA1 that promotes maintenance of normal mitochondrial structure and mitochondrial protein metabolism. Ensures cell proliferation, maintains normal cristae morphology and complex I respiration activity, promotes antiapoptotic activity and protects mitochondria from the accumulation of oxidatively damaged membrane proteins. Required to control the accumulation of nonassembled respiratory chain subunits (NDUFB6, OX4 and ND1). Involved in the mitochondrial adaptation in response to various signals, such as stress or developmental cues, by mediating degradation of mitochondrial proteins to rewire the mitochondrial proteome. Catalyzes degradation of mitochondrial proteins, such as translocases, lipid transfer proteins and metabolic enzymes in response to nutrient starvation in order to limit mitochondrial biogenesis: mechanistically, YME1L is activated by decreased phosphatidylethanolamine levels caused by LPIN1 activity in response to mTORC1 inhibition. Acts as a regulator of adult neural stem cell self-renewal by promoting mitochondrial proteome rewiring, preserving neural stem and progenitor cells self-renewal. Required for normal, constitutive degradation of PRELID1. Catalyzes the degradation of OMA1 in response to membrane depolarization. Mediates degradation of TIMM17A downstream of the integrated stress response (ISR). Catalyzes degradation of MICU1 when MICU1 is not assembled via an interchain disulfide. This chain is ATP-dependent zinc metalloprotease YME1L1 (YME1L1), found in Homo sapiens (Human).